The chain runs to 593 residues: NADH-quinone oxidoreductase subunit C/D 1 (593 aa).

Positions 1–193 (MPWAKEGDLQ…DNLEGLMNYD (193 aa)) are NADH dehydrogenase I subunit C. The NADH dehydrogenase I subunit D stretch occupies residues 217 to 593 (AQIVLNWGPL…IDPVVGETDR (377 aa)).

This sequence in the N-terminal section; belongs to the complex I 30 kDa subunit family. It in the C-terminal section; belongs to the complex I 49 kDa subunit family. In terms of assembly, NDH-1 is composed of 13 different subunits. Subunits NuoB, CD, E, F, and G constitute the peripheral sector of the complex.

The protein resides in the cell inner membrane. The enzyme catalyses a quinone + NADH + 5 H(+)(in) = a quinol + NAD(+) + 4 H(+)(out). In terms of biological role, NDH-1 shuttles electrons from NADH, via FMN and iron-sulfur (Fe-S) centers, to quinones in the respiratory chain. The immediate electron acceptor for the enzyme in this species is believed to be ubiquinone. Couples the redox reaction to proton translocation (for every two electrons transferred, four hydrogen ions are translocated across the cytoplasmic membrane), and thus conserves the redox energy in a proton gradient. The chain is NADH-quinone oxidoreductase subunit C/D 1 (nuoC1) from Aquifex aeolicus (strain VF5).